Here is a 134-residue protein sequence, read N- to C-terminus: Profilin-3 (134 aa).

Cys13 and Cys118 are disulfide-bonded. The Involved in PIP2 interaction motif lies at 84 to 100; sequence AVIRGKKGSGGITSKKT. Phosphothreonine is present on Thr114.

This sequence belongs to the profilin family. As to quaternary structure, occurs in many kinds of cells as a complex with monomeric actin in a 1:1 ratio. Phosphorylated by MAP kinases.

Its subcellular location is the cytoplasm. The protein localises to the cytoskeleton. Its function is as follows. Binds to actin and affects the structure of the cytoskeleton. At high concentrations, profilin prevents the polymerization of actin, whereas it enhances it at low concentrations. This Olea europaea (Common olive) protein is Profilin-3.